The sequence spans 309 residues: THAP domain-containing protein 7 (309 aa).

The THAP-type zinc-finger motif lies at 1–93; it reads MPRHCSAAGC…LKEGAVPTIF (93 aa). At S162 the chain carries Phosphoserine. The interval 176-210 is disordered; the sequence is SDLLGPLGAQADEAGCSTQPSPEQHPSPLEPQPAS. Over residues 198–209 the composition is skewed to pro residues; sequence EQHPSPLEPQPA. Position 210 is a phosphoserine (S210). The HCFC1-binding motif (HBM) motif lies at 229–232; the sequence is EHSY.

Forms homodimers. Interacts with HDAC3 and nuclear hormone receptor corepressors. Interacts via HBM with HCFC1.

It is found in the nucleus. It localises to the chromosome. Its function is as follows. Chromatin-associated, histone tail-binding protein that represses transcription via recruitment of HDAC3 and nuclear hormone receptor corepressors. The chain is THAP domain-containing protein 7 (Thap7) from Mus musculus (Mouse).